The sequence spans 789 residues: Zinc finger protein GLIS1 (789 aa).

Basic and acidic residues-rich tracts occupy residues 1–16 (MHCEVAEALSDKRPKE) and 63–74 (RAHDLLRPRSPR). Disordered regions lie at residues 1–29 (MHCEVAEALSDKRPKEAPGAPGQGRGPVS), 53–93 (LLPR…YGHS), and 278–304 (PPLPGDLGGPPKRSRPGPASSDGQEGS). Residues 80 to 92 (KTGSGKVNGSYGH) are compositionally biased toward polar residues. The segment at 366-391 (QACRWVDCCAAYEQQEELVRHIEKSH) adopts a C2H2-type 1 zinc-finger fold. The C2H2-type 2; atypical zinc-finger motif lies at 400-427 (FTCFWAGCVRRYKPFNARYKLLIHMRVH). 3 C2H2-type zinc fingers span residues 433-457 (NKCMFEGCSKAFSRLENLKIHLRSH), 463-487 (YLCQHPGCQKAFSNSSDRAKHQRTH), and 493-517 (YACQIPGCSKRYTDPSSLRKHVKAH). Disordered regions lie at residues 506–529 (DPSSLRKHVKAHSAKEQQVRKKLH) and 573–684 (VYPG…QGYQ). A Bipartite nuclear localization signal motif is present at residues 511–527 (RKHVKAHSAKEQQVRKK). Positions 648–658 (ASQSQSPGGQS) are enriched in low complexity.

It belongs to the GLI C2H2-type zinc-finger protein family. In terms of assembly, interacts with KLF4. Interacts with POU5F1 and/or POU5F1B. Interacts with SOX2. In terms of tissue distribution, in the adult, expressed highly in placenta and kidney and at lower levels in the testis, brain, colon, brown fat tissue and thymus. During embryo development, expressed in the frontal nasal region, branchial arches, somites, vibrissal and hair follicles, limb buds, craniofacial regions, ventral part of the tail, intervertebral disks, teeth, eyes and kidney.

The protein localises to the nucleus. Acts both as a repressor and an ctivator of transcription. Binds to the consensus sequence 5'-GACCACCCAC-3'. By controlling the expression of genes involved in cell differentiation inhibits the lineage commitment of multipotent cells. Prevents, for instance, the differentiation of multipotent mesenchymal cells into adipocyte and osteoblast. This chain is Zinc finger protein GLIS1, found in Mus musculus (Mouse).